Here is a 204-residue protein sequence, read N- to C-terminus: Pneumococcal vaccine antigen A (204 aa).

The protein localises to the cell surface. This Streptococcus pneumoniae serotype 4 (strain ATCC BAA-334 / TIGR4) protein is Pneumococcal vaccine antigen A (pvaA).